We begin with the raw amino-acid sequence, 155 residues long: Large ribosomal subunit protein eL24 (155 aa).

A disordered region spans residues 92-155 (AKRNMKPEVR…KSAPRVGGKR (64 aa)). Residues 96-117 (MKPEVRKAQRDQAIKAAKEQKK) are compositionally biased toward basic and acidic residues. The span at 124–133 (KASAPAPKAK) shows a compositional bias: low complexity.

The protein belongs to the eukaryotic ribosomal protein eL24 family.

The protein is Large ribosomal subunit protein eL24 (RpL24) of Spodoptera frugiperda (Fall armyworm).